The following is a 302-amino-acid chain: MVSQQQIEAIGGVLNNKERPLKERFRALFTLKNIGGGAAIEAISKAFDDDSALLKHELAYCLGQMQDAQALDILTKVLKDTTQEPMVRHEAAEAMGAIGHPDVLPILEEYKQDPVVEVAETCAIALDRVRWLQSGQKVDDSNPYASVDPSPPTAGDKSVTELKAIYLDAQQSLFDRYRAMFSLRNLRTEESVLAIAEGLKDSSALFRHEVAFVLGQLQEPCSIPFLQENLEDRLENEMVRHECAEALGAIATEDCIQILNRYAEDDKRVVKESCVIALDMCEYENSPEFQYADGLAKLDATK.

HEAT-like PBS-type repeat units lie at residues E23–D49, L54–D80, V87–D113, D175–D201, F206–D232, and V239–D265. Fe cation-binding residues include H56, E57, H89, and E90. Residues H208, E209, H241, and E242 each coordinate Fe cation.

The protein belongs to the deoxyhypusine hydroxylase family. Requires Fe(2+) as cofactor.

The protein resides in the endoplasmic reticulum membrane. It carries out the reaction [eIF5A protein]-deoxyhypusine + AH2 + O2 = [eIF5A protein]-hypusine + A + H2O. It functions in the pathway protein modification; eIF5A hypusination. In terms of biological role, catalyzes the hydroxylation of the N(6)-(4-aminobutyl)-L-lysine intermediate to form hypusine, an essential post-translational modification only found in mature eIF-5A factor. Essential for organismal viability and plays a role in a wide number of important processes such as cell growth and proliferation, and regulates induction of autophagy and protein synthesis. Has a role in eIF-5A-mediated translational control. The protein is Deoxyhypusine hydroxylase of Drosophila melanogaster (Fruit fly).